The chain runs to 400 residues: Small ribosomal subunit protein bS1 (400 aa).

S1 motif domains lie at 17–87, 107–173, 194–262, and 279–348; these read GDVV…VTYL, EEVV…LSRR, GDVV…LSLK, and GDVV…LSIK. Positions 351 to 366 are enriched in basic and acidic residues; sequence EERPAQEEGQKEEKRA. The disordered stretch occupies residues 351–400; sequence EERPAQEEGQKEEKRAARPRRPRRQEKRDFELPETQTGFSMADLFGDIEL.

The protein belongs to the bacterial ribosomal protein bS1 family. In terms of processing, phosphorylated.

Binds mRNA; thus facilitating recognition of the initiation point. It is needed to translate mRNA with a short Shine-Dalgarno (SD) purine-rich sequence. This Streptococcus pneumoniae (strain ATCC BAA-255 / R6) protein is Small ribosomal subunit protein bS1 (rpsA).